A 285-amino-acid polypeptide reads, in one-letter code: Bifunctional protein FolD (285 aa).

Residues 165–167 (GRS) and S190 contribute to the NADP(+) site.

The protein belongs to the tetrahydrofolate dehydrogenase/cyclohydrolase family. In terms of assembly, homodimer.

It carries out the reaction (6R)-5,10-methylene-5,6,7,8-tetrahydrofolate + NADP(+) = (6R)-5,10-methenyltetrahydrofolate + NADPH. The catalysed reaction is (6R)-5,10-methenyltetrahydrofolate + H2O = (6R)-10-formyltetrahydrofolate + H(+). The protein operates within one-carbon metabolism; tetrahydrofolate interconversion. Catalyzes the oxidation of 5,10-methylenetetrahydrofolate to 5,10-methenyltetrahydrofolate and then the hydrolysis of 5,10-methenyltetrahydrofolate to 10-formyltetrahydrofolate. The polypeptide is Bifunctional protein FolD (Burkholderia pseudomallei (strain 1106a)).